The sequence spans 195 residues: UPF0314 protein RHECIAT_CH0004233 (195 aa).

A run of 4 helical transmembrane segments spans residues 15–35, 64–84, 127–147, and 150–170; these read FWFV…YLMG, WYTP…YLIL, GDSI…FFFA, and APVA…GYVI.

It belongs to the UPF0314 family.

The protein resides in the cell membrane. The sequence is that of UPF0314 protein RHECIAT_CH0004233 from Rhizobium etli (strain CIAT 652).